A 591-amino-acid polypeptide reads, in one-letter code: Frizzled-9 (591 aa).

The N-terminal stretch at 1–22 is a signal peptide; it reads MAVAPLRGALLLWQLLAAGGAA. Topologically, residues 23-229 are extracellular; sequence LEIGRFDPER…EVFWSRRDKD (207 aa). The FZ domain maps to 34 to 155; it reads RGAAPCQAVE…NDPHALCMEA (122 aa). 5 disulfides stabilise this stretch: C39/C100, C47/C93, C84/C122, C111/C152, and C115/C139. Residue N53 is glycosylated (N-linked (GlcNAc...) asparagine). Positions 58–172 are required for Wnt-activated receptor activity; sequence PNLLGHTSQG…PAEPHKGLGM (115 aa). N158 carries an N-linked (GlcNAc...) asparagine glycan. Residues 230-250 form a helical membrane-spanning segment; it reads FALVWMAVWSALCFFSTAFTV. The Cytoplasmic portion of the chain corresponds to 251 to 266; it reads LTFLLEPHRFQYPERP. The chain crosses the membrane as a helical span at residues 267 to 287; that stretch reads IIFLSMCYNVYSLAFLIRAVA. Residues 288 to 315 are Extracellular-facing; the sequence is GAQSVACDQEAGALYVIQEGLENTGCTL. The chain crosses the membrane as a helical span at residues 316-336; that stretch reads VFLLLYYFGMASSLWWVVLTL. Topologically, residues 337-355 are cytoplasmic; it reads TWFLAAGKKWGHEAIEAHG. Residues 356 to 376 traverse the membrane as a helical segment; the sequence is SYFHMAAWGLPALKTIVILTL. Topologically, residues 377–400 are extracellular; that stretch reads RKVAGDELTGLCYVASTDAAALTG. The chain crosses the membrane as a helical span at residues 401 to 421; sequence FVLVPLSGYLVLGSSFLLTGF. Residues 422 to 447 are Cytoplasmic-facing; it reads VALFHIRKIMKTGGTNTEKLEKLMVK. The chain crosses the membrane as a helical span at residues 448–468; that stretch reads IGVFSILYTVPATCVIVCYVY. Residues 469 to 508 are Extracellular-facing; sequence ERLNMDFWRLRATEQPCAAAAGPGGRRDCSLPGGSVPTVA. The helical transmembrane segment at 509-529 threads the bilayer; sequence VFMLKIFMSLVVGITSGVWVW. Topologically, residues 530-591 are cytoplasmic; sequence SSKTFQTWQS…DPSLENPTHL (62 aa). Residues 532–537 carry the Lys-Thr-X-X-X-Trp motif, mediates interaction with the PDZ domain of Dvl family members motif; that stretch reads KTFQTW. Residues 554–591 form a required for CTNNB1 accumulation and TCF transcription factor activity region; it reads ACRAPGSYGRGTHCHYKAPTVVLHMTKTDPSLENPTHL.

It belongs to the G-protein coupled receptor Fz/Smo family. Post-translationally, ubiquitinated by ZNRF3, leading to its degradation by the proteasome. As to expression, expressed predominantly in adult and fetal brain, testis, eye, skeletal muscle and kidney. Moderately expressed in pancreas, thyroid, adrenal cortex, small intestine and stomach. Detected in fetal liver and kidney. Expressed in neural progenitor cells.

The protein resides in the cell membrane. Functionally, receptor for WNT2 that is coupled to the beta-catenin canonical signaling pathway, which leads to the activation of disheveled proteins, inhibition of GSK-3 kinase, nuclear accumulation of beta-catenin and activation of Wnt target genes. Plays a role in neuromuscular junction (NMJ) assembly by negatively regulating the clustering of acetylcholine receptors (AChR) through the beta-catenin canonical signaling pathway. May play a role in neural progenitor cells (NPCs) viability through the beta-catenin canonical signaling pathway by negatively regulating cell cycle arrest leading to inhibition of neuron apoptotic process. During hippocampal development, regulates neuroblast proliferation and apoptotic cell death. Controls bone formation through non canonical Wnt signaling mediated via ISG15. Positively regulates bone regeneration through non canonical Wnt signaling. This chain is Frizzled-9 (FZD9), found in Homo sapiens (Human).